We begin with the raw amino-acid sequence, 178 residues long: Large ribosomal subunit protein uL6 (178 aa).

It belongs to the universal ribosomal protein uL6 family. In terms of assembly, part of the 50S ribosomal subunit.

Functionally, this protein binds to the 23S rRNA, and is important in its secondary structure. It is located near the subunit interface in the base of the L7/L12 stalk, and near the tRNA binding site of the peptidyltransferase center. This is Large ribosomal subunit protein uL6 from Geobacillus kaustophilus (strain HTA426).